A 197-amino-acid chain; its full sequence is Small ribosomal subunit protein uS4 (197 aa).

One can recognise an S4 RNA-binding domain in the interval 88–150 (SRLDNLVYRM…AKSLEIILDN (63 aa)).

Belongs to the universal ribosomal protein uS4 family. As to quaternary structure, part of the 30S ribosomal subunit. Contacts protein S5. The interaction surface between S4 and S5 is involved in control of translational fidelity.

One of the primary rRNA binding proteins, it binds directly to 16S rRNA where it nucleates assembly of the body of the 30S subunit. Functionally, with S5 and S12 plays an important role in translational accuracy. The chain is Small ribosomal subunit protein uS4 from Azobacteroides pseudotrichonymphae genomovar. CFP2.